The chain runs to 84 residues: MNYLIMFSLALLLVIGVESGRDGYIVDSKNCVYHCYPPCDGLCKKNGAKSGSCGFLVPSGLACWCNDLPENVPIKDPSDDCHKR.

An N-terminal signal peptide occupies residues methionine 1–serine 19. The LCN-type CS-alpha/beta domain occupies arginine 21–histidine 82. 4 disulfide bridges follow: cysteine 31–cysteine 81, cysteine 35–cysteine 53, cysteine 39–cysteine 63, and cysteine 43–cysteine 65. Arginine 84 is a propeptide (removed by a carboxypeptidase).

Belongs to the long (4 C-C) scorpion toxin superfamily. Sodium channel inhibitor family. Alpha subfamily. In terms of tissue distribution, expressed by the venom gland.

The protein resides in the secreted. Alpha toxins bind voltage-independently at site-3 of sodium channels (Nav) and inhibit the inactivation of the activated channels, thereby blocking neuronal transmission. This toxin seems to specifically act on Nav1.6/SCN8A sodium channel. In vitro, it inhibits the proliferation of the prostate cancer cell line DU145 (IC(50)=15 uM). It shows low effect on the adhesion of DU145 cells to fibronectin (at 15 uM) and is inactive on DU145 cells migration. This chain is Toxin Aah4, found in Androctonus australis (Sahara scorpion).